We begin with the raw amino-acid sequence, 129 residues long: Ribulose bisphosphate carboxylase small subunit (129 aa).

A compositionally biased stretch (basic and acidic residues) spans 104–120 (ENEPSLRMTRTESDGRS). Positions 104-129 (ENEPSLRMTRTESDGRSQHYTWETQR) are disordered.

It belongs to the RuBisCO small chain family. Heterohexadecamer of 8 large and 8 small subunits.

RuBisCO catalyzes two reactions: the carboxylation of D-ribulose 1,5-bisphosphate, the primary event in carbon dioxide fixation, as well as the oxidative fragmentation of the pentose substrate. Both reactions occur simultaneously and in competition at the same active site. Although the small subunit is not catalytic it is essential for maximal activity. This chain is Ribulose bisphosphate carboxylase small subunit, found in Sinorhizobium medicae (strain WSM419) (Ensifer medicae).